The following is a 581-amino-acid chain: Chaperonin GroEL 1 (581 aa).

ATP contacts are provided by residues 29 to 32 (TIGP), 86 to 90 (DGTTT), Gly413, and Asp492.

It belongs to the chaperonin (HSP60) family. As to quaternary structure, forms a cylinder of 14 subunits composed of two heptameric rings stacked back-to-back. Interacts with the co-chaperonin GroES.

The protein localises to the cytoplasm. The enzyme catalyses ATP + H2O + a folded polypeptide = ADP + phosphate + an unfolded polypeptide.. Functionally, together with its co-chaperonin GroES, plays an essential role in assisting protein folding. The GroEL-GroES system forms a nano-cage that allows encapsulation of the non-native substrate proteins and provides a physical environment optimized to promote and accelerate protein folding. This chain is Chaperonin GroEL 1, found in Prochlorococcus marinus subsp. pastoris (strain CCMP1986 / NIES-2087 / MED4).